Here is a 909-residue protein sequence, read N- to C-terminus: ABC transporter B family member 1 (909 aa).

The interval 1–36 is disordered; sequence MTKKNFNDEENESLLETYNKQQQKQSISTTNRSDQK. Residues 14–36 are compositionally biased toward polar residues; the sequence is LLETYNKQQQKQSISTTNRSDQK. A helical membrane pass occupies residues 85–105; it reads LFIQIVSLVILAGYLISINAL. The span at 125-134 shows a compositional bias: low complexity; the sequence is TDSGSVSPTS. Positions 125–147 are disordered; that stretch reads TDSGSVSPTSTPSPTPTPTPSPT. Over residues 135 to 145 the composition is skewed to pro residues; sequence TPSPTPTPTPS. The next 8 helical transmembrane spans lie at 182-202, 206-226, 275-295, 347-367, 392-412, 480-500, 572-592, and 607-627; these read FSTF…LLLI, SFIY…YNVI, IIIV…VLHI, LPII…SLAM, LALV…SWLF, VILL…IVPV, GVFS…IVYV, and LTSF…ISSL. In terms of domain architecture, ABC transmembrane type-1 spans 350 to 633; that stretch reads ILAAMVALVF…ISSLMTDFLK (284 aa). Residues 666 to 902 form the ABC transporter domain; that stretch reads IELKDVEFSY…TDGIYHNLVK (237 aa). An ATP-binding site is contributed by 701–708; the sequence is GPSGGGKS.

Belongs to the ABC transporter superfamily. ABCB family.

The protein resides in the membrane. The polypeptide is ABC transporter B family member 1 (abcB1) (Dictyostelium discoideum (Social amoeba)).